The following is a 161-amino-acid chain: Allophycocyanin beta chain (161 aa).

Asn-71 carries the N4-methylasparagine modification. Residue Cys-81 participates in (2R,3E)-phycocyanobilin binding.

Belongs to the phycobiliprotein family. In terms of assembly, heterodimer of an alpha and a beta chain. Post-translationally, contains one covalently linked phycocyanobilin chromophore.

Its subcellular location is the plastid. It localises to the chloroplast thylakoid membrane. Its function is as follows. Light-harvesting photosynthetic bile pigment-protein from the phycobiliprotein complex. Allophycocyanin has a maximum absorption at approximately 650 nanometers. The polypeptide is Allophycocyanin beta chain (apcB) (Cyanidium caldarium (Red alga)).